The chain runs to 106 residues: Small ribosomal subunit protein uS17 (106 aa).

This sequence belongs to the universal ribosomal protein uS17 family. Part of the 30S ribosomal subunit.

In terms of biological role, one of the primary rRNA binding proteins, it binds specifically to the 5'-end of 16S ribosomal RNA. The sequence is that of Small ribosomal subunit protein uS17 from Methanosphaera stadtmanae (strain ATCC 43021 / DSM 3091 / JCM 11832 / MCB-3).